The chain runs to 54 residues: uncharacterized protein (54 aa).

Residues leucine 32–isoleucine 52 traverse the membrane as a helical segment.

It is found in the host membrane. This is an uncharacterized protein from Cassava vein mosaic virus (CsVMV).